A 277-amino-acid polypeptide reads, in one-letter code: uncharacterized protein (277 aa).

A disordered region spans residues 232 to 262 (NNESAICESQASSKEDERSDKTTSSSKKKSF). Residues 234–243 (ESAICESQAS) are compositionally biased toward polar residues.

Its subcellular location is the cytoplasm. The protein localises to the nucleus. This is an uncharacterized protein from Schizosaccharomyces pombe (strain 972 / ATCC 24843) (Fission yeast).